We begin with the raw amino-acid sequence, 386 residues long: D-galactosamine-6-phosphate deaminase AgaS (386 aa).

SIS domains lie at 59-217 (LTPI…CIEM) and 222-366 (LTER…PDNP).

The protein belongs to the SIS family. AgaS subfamily.

Its subcellular location is the cytoplasm. The enzyme catalyses D-galactosamine 6-phosphate + H2O = D-tagatopyranose 1-phosphate + NH4(+). The catalysed reaction is alpha-D-glucosamine 6-phosphate + H2O = beta-D-fructose 6-phosphate + NH4(+). In terms of biological role, involved in the pathway of N-acetyl-D-galactosamine degradation. Catalyzes the conversion of D-galactosamine 6-phosphate (GalN-6-P) to D-tagatofuranose 6-phosphate (Tag-6-P). It can also catalyze the conversion of D-glucosamine 6-phosphate. The sequence is that of D-galactosamine-6-phosphate deaminase AgaS from Shewanella sp. (strain ANA-3).